A 518-amino-acid polypeptide reads, in one-letter code: 3-octaprenyl-4-hydroxybenzoate carboxy-lyase (518 aa).

A Mn(2+)-binding site is contributed by Asn177. Residues 180–182, 194–196, and 199–200 each bind prenylated FMN; these read IYR, RWL, and RG. Glu243 is a binding site for Mn(2+). The Proton donor role is filled by Asp318.

It belongs to the UbiD family. As to quaternary structure, homohexamer. Prenylated FMN is required as a cofactor. Mn(2+) serves as cofactor.

Its subcellular location is the cell membrane. It catalyses the reaction a 4-hydroxy-3-(all-trans-polyprenyl)benzoate + H(+) = a 2-(all-trans-polyprenyl)phenol + CO2. Its pathway is cofactor biosynthesis; ubiquinone biosynthesis. Its function is as follows. Catalyzes the decarboxylation of 3-octaprenyl-4-hydroxy benzoate to 2-octaprenylphenol, an intermediate step in ubiquinone biosynthesis. In Burkholderia lata (strain ATCC 17760 / DSM 23089 / LMG 22485 / NCIMB 9086 / R18194 / 383), this protein is 3-octaprenyl-4-hydroxybenzoate carboxy-lyase.